We begin with the raw amino-acid sequence, 69 residues long: Cell division protein CrgA (69 aa).

2 helical membrane-spanning segments follow: residues 14-34 (VWFP…MVLF) and 45-65 (AVGT…FAMM).

This sequence belongs to the CrgA family.

It localises to the cell membrane. Involved in cell division. This Tropheryma whipplei (strain TW08/27) (Whipple's bacillus) protein is Cell division protein CrgA.